Consider the following 313-residue polypeptide: Glucosyl-dolichyl phosphate glucuronosyltransferase (313 aa).

A helical transmembrane segment spans residues 284-304 (LIAIFVFTAAVGFGYVYGLLT).

This sequence belongs to the glycosyltransferase 2 family.

The protein localises to the cell membrane. The enzyme catalyses an archaeal dolichyl alpha-D-glucosyl phosphate + UDP-alpha-D-glucuronate = an archaeal dolichyl beta-D-glucuronosyl-(1-&gt;4)-alpha-D-glucosyl phosphate + UDP + H(+). The protein operates within cell surface structure biogenesis; S-layer biogenesis. In terms of biological role, involved in the protein N-glycosylation pathway responsible for the assembly and attachment of an N-linked pentasaccharide that decorates the S-layer glycoprotein and flagellins. Catalyzes the transfer of a glucuronate residue (GlcA) to a glucose residue already bound to a dolichol phosphate (DolP), a compound that serves as a glycan lipid carrier in Archaea. In vitro, is able to add GlcA to DolP-Glc in which the omega-position isoprene is not saturated. However, the likely physiological lipid substrate is alpha,omega-saturated. This is Glucosyl-dolichyl phosphate glucuronosyltransferase from Haloferax volcanii (strain ATCC 29605 / DSM 3757 / JCM 8879 / NBRC 14742 / NCIMB 2012 / VKM B-1768 / DS2) (Halobacterium volcanii).